The primary structure comprises 430 residues: Pre-B-cell leukemia transcription factor 2 (430 aa).

The disordered stretch occupies residues 1-52; it reads MDERLLGPPPPGGGRGGLGLVGAEPGGPGEPPGGGDPGGGSGGVPGGRGKQD. Residues 13 to 48 show a composition bias toward gly residues; sequence GGRGGLGLVGAEPGGPGEPPGGGDPGGGSGGVPGGR. Residues 48–243 form the PBC domain; that stretch reads RGKQDIGDIL…VMILRSRFLD (196 aa). The segment at 55–134 is PBC-A; that stretch reads DILQQIMTIT…EGVAGPEKGG (80 aa). Ser-136, Ser-151, and Ser-159 each carry phosphoserine. The tract at residues 137–243 is PBC-B; that stretch reads AAAAAAAAAS…VMILRSRFLD (107 aa). The homeobox; TALE-type DNA-binding region spans 244-306; sequence ARRKRRNFSK…NKRIRYKKNI (63 aa). Disordered regions lie at residues 327 to 347 and 375 to 430; these read GGHS…GGSF and LRHS…DTSN. A phosphoserine mark is found at Ser-330 and Ser-395. A compositionally biased stretch (polar residues) spans 409 to 418; sequence VTPSSVTSPT.

Belongs to the TALE/PBX homeobox family. In terms of assembly, forms heterodimers with MEIS1 and heterotrimers with MEIS1 and HOXA9. Interacts with PBXIP1.

It is found in the nucleus. Functionally, transcriptional activator that binds the sequence 5'-ATCAATCAA-3'. Activates transcription of PF4 in complex with MEIS1. This Mus musculus (Mouse) protein is Pre-B-cell leukemia transcription factor 2 (Pbx2).